The sequence spans 401 residues: Anhydro-N-acetylmuramic acid kinase (401 aa).

An ATP-binding site is contributed by 25–32 (GTSLDGLD).

The protein belongs to the anhydro-N-acetylmuramic acid kinase family.

It catalyses the reaction 1,6-anhydro-N-acetyl-beta-muramate + ATP + H2O = N-acetyl-D-muramate 6-phosphate + ADP + H(+). It functions in the pathway amino-sugar metabolism; 1,6-anhydro-N-acetylmuramate degradation. It participates in cell wall biogenesis; peptidoglycan recycling. In terms of biological role, catalyzes the specific phosphorylation of 1,6-anhydro-N-acetylmuramic acid (anhMurNAc) with the simultaneous cleavage of the 1,6-anhydro ring, generating MurNAc-6-P. Is required for the utilization of anhMurNAc either imported from the medium or derived from its own cell wall murein, and thus plays a role in cell wall recycling. The sequence is that of Anhydro-N-acetylmuramic acid kinase from Pseudoalteromonas atlantica (strain T6c / ATCC BAA-1087).